Here is a 238-residue protein sequence, read N- to C-terminus: Ion-translocating oxidoreductase complex subunit E (238 aa).

The next 5 membrane-spanning stretches (helical) occupy residues 41-61 (LGLGLATMLVLACSNAAVSLV), 71-91 (LPAFVMIIAALTTCIELLMQA), 95-115 (ELYQVLGIFIPLITTNCVILG), 130-150 (SFDGLLMGLGFALVLLVLGGL), and 184-204 (GFLLAILPPGAFIMLGLLIAL).

This sequence belongs to the NqrDE/RnfAE family. In terms of assembly, the complex is composed of six subunits: RnfA, RnfB, RnfC, RnfD, RnfE and RnfG.

The protein resides in the cell inner membrane. Functionally, part of a membrane-bound complex that couples electron transfer with translocation of ions across the membrane. In Pseudomonas aeruginosa (strain UCBPP-PA14), this protein is Ion-translocating oxidoreductase complex subunit E.